The chain runs to 110 residues: MISSANNKGAGTSRRKLRSEKAALQFSVSRVEYSLKKGRYCRRLGATAPVYLAAVLENLVAEVLDMAANVTEETSPIVIKPRHIMLAPRNDVEVEQAVSRCHHLGIRCRP.

This sequence belongs to the histone H2A family. In terms of assembly, the nucleosome is a histone octamer containing two molecules each of H2A, H2B, H3 and H4 assembled in one H3-H4 heterotetramer and two H2A-H2B heterodimers. The octamer wraps approximately 147 bp of DNA. In terms of tissue distribution, expressed in the generative cell within the bicellular pollen. Not detected in other reproductive or vegetative tissues.

The protein localises to the nucleus. Its subcellular location is the chromosome. Its function is as follows. Core component of nucleosome. Nucleosomes wrap and compact DNA into chromatin, limiting DNA accessibility to the cellular machineries which require DNA as a template. Histones thereby play a central role in transcription regulation, DNA repair, DNA replication and chromosomal stability. DNA accessibility is regulated via a complex set of post-translational modifications of histones, also called histone code, and nucleosome remodeling. The protein is Histone H2A.1 (gcH2A) of Lilium longiflorum (Trumpet lily).